The sequence spans 339 residues: Phosphoribosylformylglycinamidine cyclo-ligase (339 aa).

This sequence belongs to the AIR synthase family.

The protein resides in the cytoplasm. It catalyses the reaction 2-formamido-N(1)-(5-O-phospho-beta-D-ribosyl)acetamidine + ATP = 5-amino-1-(5-phospho-beta-D-ribosyl)imidazole + ADP + phosphate + H(+). It functions in the pathway purine metabolism; IMP biosynthesis via de novo pathway; 5-amino-1-(5-phospho-D-ribosyl)imidazole from N(2)-formyl-N(1)-(5-phospho-D-ribosyl)glycinamide: step 2/2. The chain is Phosphoribosylformylglycinamidine cyclo-ligase from Methanobrevibacter smithii (strain ATCC 35061 / DSM 861 / OCM 144 / PS).